The sequence spans 1095 residues: Actin cross-linking toxin VgrG1 (1095 aa).

Positions 712-1095 (TPDFPTHFPK…TVIQQVESLV (384 aa)) constitute an ACD domain. An ATP-binding site is contributed by 723–727 (SIGIE). Residues glutamate 727 and glutamate 789 each coordinate Mg(2+). Residue serine 792 coordinates ATP. Glutamine 873 serves as a coordination point for Mg(2+). ATP is bound at residue arginine 979. Glutamate 1050 provides a ligand contact to Mg(2+).

The protein belongs to the VgrG protein family. As to quaternary structure, interacts with protein VC1417. Mg(2+) is required as a cofactor.

The protein resides in the secreted. The protein localises to the host cytoplasm. Its subcellular location is the host cytosol. Functionally, part of the type VI secretion system (T6SS) specialized secretion system, which delivers several virulence factors in both prokaryotic and eukaryotic cells during infection. Forms the spike at the tip of the elongating tube probably formed by hemolysin co-regulated protein/Hcp. Allows the delivery of the TseL antibacterial toxin to target cells where it exerts its toxicity. Also acts directly as an actin-directed toxin that catalyzes the covalent cross-linking of host cytoplasmic monomeric actin. Mediates the cross-link between 'Lys-50' of one monomer and 'Glu-270' of another actin monomer, resulting in formation of highly toxic actin oligomers that cause cell rounding. The toxin can be highly efficient at very low concentrations by acting on formin homology family proteins: toxic actin oligomers bind with high affinity to formins and adversely affect both nucleation and elongation abilities of formins, causing their potent inhibition in both profilin-dependent and independent manners. Acts as an acid--amino-acid ligase that transfers the gamma-phosphoryl group of ATP to the 'Glu-270' actin residue, resulting in the formation of an activated acyl phosphate intermediate. This intermediate is further hydrolyzed and the energy of hydrolysis is utilized for the formation of the amide bond between actin subunits. The sequence is that of Actin cross-linking toxin VgrG1 from Vibrio cholerae serotype O1 (strain ATCC 39541 / Classical Ogawa 395 / O395).